The sequence spans 879 residues: DNA mismatch repair protein MutS (879 aa).

Residue G639–S646 coordinates ATP.

It belongs to the DNA mismatch repair MutS family.

Functionally, this protein is involved in the repair of mismatches in DNA. It is possible that it carries out the mismatch recognition step. This protein has a weak ATPase activity. This chain is DNA mismatch repair protein MutS, found in Aromatoleum aromaticum (strain DSM 19018 / LMG 30748 / EbN1) (Azoarcus sp. (strain EbN1)).